The sequence spans 282 residues: MPGMKEIKSRIKSVQSTRQITNAMEIVSTTKFKRYSKLVTESRPYEESMRKILGNIASGVKNEGHPLFDGRKEVKSIAIIVITSDRGLCGSFNSSTLKELEKLVEKNKNKNITIIPFGRKAIDFITKRNYEFSESFSKISPDEMNKIAGEISEEVVEKYNNHIYDEVYVIYNKFISALRYDLTCERIIPITRPEVELNSEYIFEPSTEYILSALLPRFINLQIYQAILNNTASEHSARKNSMSSATDNADEMIKTLNIKYNRNRQSAITQEITEIVGGASAL.

It belongs to the ATPase gamma chain family. As to quaternary structure, F-type ATPases have 2 components, CF(1) - the catalytic core - and CF(0) - the membrane proton channel. CF(1) has five subunits: alpha(3), beta(3), gamma(1), delta(1), epsilon(1). CF(0) has three main subunits: a, b and c.

It localises to the cell inner membrane. In terms of biological role, produces ATP from ADP in the presence of a proton gradient across the membrane. The gamma chain is believed to be important in regulating ATPase activity and the flow of protons through the CF(0) complex. The sequence is that of ATP synthase gamma chain from Fusobacterium nucleatum subsp. nucleatum (strain ATCC 25586 / DSM 15643 / BCRC 10681 / CIP 101130 / JCM 8532 / KCTC 2640 / LMG 13131 / VPI 4355).